The chain runs to 444 residues: Phosphoglucosamine mutase (444 aa).

Ser101 (phosphoserine intermediate) is an active-site residue. Mg(2+)-binding residues include Ser101, Asp239, Asp241, and Asp243. Ser101 bears the Phosphoserine mark.

This sequence belongs to the phosphohexose mutase family. The cofactor is Mg(2+). Post-translationally, activated by phosphorylation.

The catalysed reaction is alpha-D-glucosamine 1-phosphate = D-glucosamine 6-phosphate. In terms of biological role, catalyzes the conversion of glucosamine-6-phosphate to glucosamine-1-phosphate. In Alcanivorax borkumensis (strain ATCC 700651 / DSM 11573 / NCIMB 13689 / SK2), this protein is Phosphoglucosamine mutase.